The sequence spans 128 residues: Gastrotropin (128 aa).

An N-acetylalanine modification is found at Ala-2.

The protein belongs to the calycin superfamily. Fatty-acid binding protein (FABP) family. In terms of tissue distribution, expressed in ovary granulosa and luteal cells.

It localises to the cytoplasm. Its subcellular location is the membrane. In terms of biological role, binds to bile acids and is involved in enterohepatic bile acid metabolism. Required for efficient apical to basolateral transport of conjugated bile acids in ileal enterocytes. Stimulates gastric acid and pepsinogen secretion. The sequence is that of Gastrotropin (Fabp6) from Mus musculus (Mouse).